The chain runs to 138 residues: Translation initiation factor 2 subunit beta (138 aa).

Belongs to the eIF-2-beta/eIF-5 family. As to quaternary structure, heterotrimer composed of an alpha, a beta and a gamma chain.

EIF-2 functions in the early steps of protein synthesis by forming a ternary complex with GTP and initiator tRNA. In Methanococcus maripaludis (strain DSM 14266 / JCM 13030 / NBRC 101832 / S2 / LL), this protein is Translation initiation factor 2 subunit beta.